The chain runs to 399 residues: Leu/Ile/Val-binding protein homolog 7 (399 aa).

The first 22 residues, 1–22 (MEKHLIALSVAALLAGAAPASA), serve as a signal peptide directing secretion.

This sequence belongs to the leucine-binding protein family.

Component of an amino-acid transport system. In Brucella melitensis biotype 1 (strain ATCC 23456 / CCUG 17765 / NCTC 10094 / 16M), this protein is Leu/Ile/Val-binding protein homolog 7.